The chain runs to 308 residues: MATITAAMVKDLRETTGVGMMDCKQALTENDGDMQAAIDWLRKKGLSKAAKKAGRVAAEGLIGALTDKTKGVLVEVNSETDFVARNEQFQGLVKMIAQVALKVGADLDKINAAPVGSSTVATAIADAIATIGENMTLRRAAVLEVGQGLVASYVHNAVTDGAGKLGVIVALESAGKTDELAALGKQLSMHVASANPQALEPAGLDPDVVRREKDVMADKYRQQGKPEAMIEKIVENGLKTYYKEVCLLEQAFIFDEKGKSVAQAVKEAEGRVGAPIKVTGFVRYALGEGIEKQTSDFAAEVAAASGQK.

The segment at 80-83 (TDFV) is involved in Mg(2+) ion dislocation from EF-Tu.

It belongs to the EF-Ts family.

The protein localises to the cytoplasm. Functionally, associates with the EF-Tu.GDP complex and induces the exchange of GDP to GTP. It remains bound to the aminoacyl-tRNA.EF-Tu.GTP complex up to the GTP hydrolysis stage on the ribosome. This chain is Elongation factor Ts, found in Rhodopseudomonas palustris (strain BisB18).